Reading from the N-terminus, the 1379-residue chain is DNA-directed RNA polymerase subunit beta (1379 aa).

It belongs to the RNA polymerase beta chain family. In terms of assembly, the RNAP catalytic core consists of 2 alpha, 1 beta, 1 beta' and 1 omega subunit. When a sigma factor is associated with the core the holoenzyme is formed, which can initiate transcription.

The enzyme catalyses RNA(n) + a ribonucleoside 5'-triphosphate = RNA(n+1) + diphosphate. In terms of biological role, DNA-dependent RNA polymerase catalyzes the transcription of DNA into RNA using the four ribonucleoside triphosphates as substrates. The chain is DNA-directed RNA polymerase subunit beta from Rhizobium leguminosarum bv. trifolii (strain WSM2304).